The primary structure comprises 88 residues: Small ribosomal subunit protein eS25B (88 aa).

It belongs to the eukaryotic ribosomal protein eS25 family. As to quaternary structure, component of the small ribosomal subunit (SSU). Mature yeast ribosomes consist of a small (40S) and a large (60S) subunit. The 40S small subunit contains 1 molecule of ribosomal RNA (18S rRNA) and at least 33 different proteins. The large 60S subunit contains 3 rRNA molecules (25S, 5.8S and 5S rRNA) and at least 46 different proteins.

It is found in the cytoplasm. In terms of biological role, component of the ribosome, a large ribonucleoprotein complex responsible for the synthesis of proteins in the cell. The small ribosomal subunit (SSU) binds messenger RNAs (mRNAs) and translates the encoded message by selecting cognate aminoacyl-transfer RNA (tRNA) molecules. The large subunit (LSU) contains the ribosomal catalytic site termed the peptidyl transferase center (PTC), which catalyzes the formation of peptide bonds, thereby polymerizing the amino acids delivered by tRNAs into a polypeptide chain. The nascent polypeptides leave the ribosome through a tunnel in the LSU and interact with protein factors that function in enzymatic processing, targeting, and the membrane insertion of nascent chains at the exit of the ribosomal tunnel. This Schizosaccharomyces pombe (strain 972 / ATCC 24843) (Fission yeast) protein is Small ribosomal subunit protein eS25B (rps2501).